We begin with the raw amino-acid sequence, 399 residues long: Formate-dependent phosphoribosylglycinamide formyltransferase (399 aa).

Residues 22 to 23 (EL) and E82 contribute to the N(1)-(5-phospho-beta-D-ribosyl)glycinamide site. ATP contacts are provided by residues R115, K157, 162-167 (SSGKGQ), 197-200 (EAVV), and E205. Positions 120 to 315 (RLAAEELGLQ…EFELHARAIL (196 aa)) constitute an ATP-grasp domain. Residues E274 and E286 each coordinate Mg(2+). Residues D293, K362, and 369–370 (RR) each bind N(1)-(5-phospho-beta-D-ribosyl)glycinamide.

This sequence belongs to the PurK/PurT family. Homodimer.

It catalyses the reaction N(1)-(5-phospho-beta-D-ribosyl)glycinamide + formate + ATP = N(2)-formyl-N(1)-(5-phospho-beta-D-ribosyl)glycinamide + ADP + phosphate + H(+). Its pathway is purine metabolism; IMP biosynthesis via de novo pathway; N(2)-formyl-N(1)-(5-phospho-D-ribosyl)glycinamide from N(1)-(5-phospho-D-ribosyl)glycinamide (formate route): step 1/1. Its function is as follows. Involved in the de novo purine biosynthesis. Catalyzes the transfer of formate to 5-phospho-ribosyl-glycinamide (GAR), producing 5-phospho-ribosyl-N-formylglycinamide (FGAR). Formate is provided by PurU via hydrolysis of 10-formyl-tetrahydrofolate. In Thioalkalivibrio sulfidiphilus (strain HL-EbGR7), this protein is Formate-dependent phosphoribosylglycinamide formyltransferase.